The primary structure comprises 108 residues: Small ribosomal subunit protein uS17 (108 aa).

Residues 1–26 (MREKMAEATETQASETSTRGRPKTRV) form a disordered region. Residues 8–17 (ATETQASETS) are compositionally biased toward low complexity.

Belongs to the universal ribosomal protein uS17 family. As to quaternary structure, part of the 30S ribosomal subunit.

In terms of biological role, one of the primary rRNA binding proteins, it binds specifically to the 5'-end of 16S ribosomal RNA. This chain is Small ribosomal subunit protein uS17, found in Myxococcus xanthus (strain DK1622).